We begin with the raw amino-acid sequence, 245 residues long: Endonuclease III (245 aa).

The HhH domain maps to Met119–Gly138. Residues Cys198, Cys205, Cys208, and Cys214 each coordinate [4Fe-4S] cluster.

The protein belongs to the Nth/MutY family. The cofactor is [4Fe-4S] cluster.

It carries out the reaction 2'-deoxyribonucleotide-(2'-deoxyribose 5'-phosphate)-2'-deoxyribonucleotide-DNA = a 3'-end 2'-deoxyribonucleotide-(2,3-dehydro-2,3-deoxyribose 5'-phosphate)-DNA + a 5'-end 5'-phospho-2'-deoxyribonucleoside-DNA + H(+). In terms of biological role, DNA repair enzyme that has both DNA N-glycosylase activity and AP-lyase activity. The DNA N-glycosylase activity releases various damaged pyrimidines from DNA by cleaving the N-glycosidic bond, leaving an AP (apurinic/apyrimidinic) site. The AP-lyase activity cleaves the phosphodiester bond 3' to the AP site by a beta-elimination, leaving a 3'-terminal unsaturated sugar and a product with a terminal 5'-phosphate. The chain is Endonuclease III from Mycobacterium leprae (strain TN).